The sequence spans 837 residues: Intestinal mucin-like protein (837 aa).

Repeat copies occupy residues 17–27 (PSTPSTPPPST), 28–38 (PTTPTSSQTTT), 39–50 (PSTPSTTSSKST), and 51–62 (PSTPQSTSSKST). The interval 17 to 70 (PSTPSTPPPSTPTTPTSSQTTTPSTPSTTSSKSTPSTPQSTSSKSTPSTPPKTT) is 5 X 11 AA approximate tandem repeats. The interval 17–75 (PSTPSTPPPSTPTTPTSSQTTTPSTPSTTSSKSTPSTPQSTSSKSTPSTPPKTTLPGCL) is disordered. Residues 29–70 (TTPTSSQTTTPSTPSTTSSKSTPSTPQSTSSKSTPSTPPKTT) are compositionally biased toward low complexity. A 5; truncated repeat occupies 63–70 (PSTPPKTT). Residues Asn-91 and Asn-164 are each glycosylated (N-linked (GlcNAc...) asparagine). Residues 141–324 (CYCTGWGDPH…VNDPSKPHCP (184 aa)) form the VWFD domain. 3 disulfides stabilise this stretch: Cys-143–Cys-284, Cys-165–Cys-323, and Cys-189–Cys-197. The segment at 149-837 (PHFVTFDGLY…RSSPRLLGRK (689 aa)) is probably important for disulfide-bond mediated mucin polymerization (link domain). 12 N-linked (GlcNAc...) asparagine glycosylation sites follow: Asn-278, Asn-289, Asn-344, Asn-410, Asn-444, Asn-515, Asn-538, Asn-612, Asn-627, Asn-695, Asn-727, and Asn-749. 2 consecutive VWFC domains span residues 472–543 (CGCV…TSCK) and 581–648 (GVCV…KKCQ). Intrachain disulfides connect Cys-732–Cys-779, Cys-746–Cys-793, Cys-755–Cys-809, and Cys-759–Cys-811. Residues 732–817 (CSAIPVMKEI…SCLCQGTVCE (86 aa)) enclose the CTCK domain.

In terms of assembly, multimeric. As to expression, coats the epithelia of the intestines.

The protein localises to the secreted. This chain is Intestinal mucin-like protein, found in Rattus norvegicus (Rat).